Here is a 52-residue protein sequence, read N- to C-terminus: uncharacterized protein (52 aa).

This is an uncharacterized protein from Homo sapiens (Human).